Consider the following 394-residue polypeptide: Cytochrome b (394 aa).

The next 4 membrane-spanning stretches (helical) occupy residues 39–59, 83–105, 120–140, and 186–206; these read FGSLAGICLVIQIVTGVFLAM, WLLRYMHANGASMFFIVVYLHTF, VWCLGVVIFLLMIVTAFIGYV, and FFSLYHLLPFILVGASLLHLA. 2 residues coordinate heme b: histidine 89 and histidine 103. Positions 191 and 204 each coordinate heme b. Histidine 209 serves as a coordination point for a ubiquinone. Helical transmembrane passes span 232–252, 296–316, 328–348, and 355–374; these read FYVKDLVGWVAFAIFFSIWIF, AGGVAAIALVFICLLALPFFK, IYQGIFWLLLADCLLLGWIGC, and FVTIGQISSIVFFLFFAITP.

The protein belongs to the cytochrome b family. The main subunits of complex b-c1 are: cytochrome b, cytochrome c1 and the Rieske protein. Heme b is required as a cofactor.

It localises to the mitochondrion inner membrane. Its function is as follows. Component of the ubiquinol-cytochrome c reductase complex (complex III or cytochrome b-c1 complex) that is part of the mitochondrial respiratory chain. The b-c1 complex mediates electron transfer from ubiquinol to cytochrome c. Contributes to the generation of a proton gradient across the mitochondrial membrane that is then used for ATP synthesis. The sequence is that of Cytochrome b (MT-CYB) from Oenothera berteroana (Bertero's evening primrose).